The sequence spans 189 residues: Interferon alpha-1 (189 aa).

The first 23 residues, 1 to 23 (MAPAWSLLLALLLLSCNAICSLG), serve as a signal peptide directing secretion. Disulfide bonds link Cys-24–Cys-122 and Cys-52–Cys-162.

It belongs to the alpha/beta interferon family. Interacts with CR2.

It is found in the secreted. In terms of biological role, produced by macrophages, IFN-alpha have antiviral activities. Interferon stimulates the production of two enzymes: a protein kinase and an oligoadenylate synthetase. This Bos taurus (Bovine) protein is Interferon alpha-1.